Here is a 38-residue protein sequence, read N- to C-terminus: MQPILEKLYRAESMSQQESQQLFSAIVRGELEPSQLAA.

The protein belongs to the anthranilate phosphoribosyltransferase family. In terms of assembly, homodimer.

It carries out the reaction N-(5-phospho-beta-D-ribosyl)anthranilate + diphosphate = 5-phospho-alpha-D-ribose 1-diphosphate + anthranilate. The protein operates within amino-acid biosynthesis; L-tryptophan biosynthesis; L-tryptophan from chorismate: step 2/5. Catalyzes the transfer of the phosphoribosyl group of 5-phosphorylribose-1-pyrophosphate (PRPP) to anthranilate to yield N-(5'-phosphoribosyl)-anthranilate (PRA). In Serratia marcescens, this protein is Anthranilate phosphoribosyltransferase (trpD).